Here is a 250-residue protein sequence, read N- to C-terminus: Probable transcriptional regulatory protein RC1_1808 (250 aa).

Positions 1-21 (MAGHSQFKNIMHRKGAQDAKR) are disordered.

It belongs to the TACO1 family.

The protein resides in the cytoplasm. In Rhodospirillum centenum (strain ATCC 51521 / SW), this protein is Probable transcriptional regulatory protein RC1_1808.